The following is a 253-amino-acid chain: MVNGIYTKSFLERIQEELPEWQRIAFELLAETLGDDADTFPCIPGRQAFLTDQLRIAFAGDPRENRTAEELAPLLAEYGKISRDTGKYASLVVLFDTPEDLAEHYSIEAYEELFWRFLNRLSHQDEKEWPEDIPADPEHYKWEFCFDGEPYFILCATPGHEARRSRSFPFFMVTFQPRWVFDDLNGSTAFGRNMSRLIRSRLEAYDQAPIHPQLGWYGGKDNREWKQYFLRDDEKQVSKCPFSYLKNMFNKMK.

Belongs to the DcsA family.

This is an uncharacterized protein from Bacillus subtilis (strain 168).